Here is a 496-residue protein sequence, read N- to C-terminus: Lysine--tRNA ligase (496 aa).

Mg(2+) contacts are provided by E409 and E416.

This sequence belongs to the class-II aminoacyl-tRNA synthetase family. In terms of assembly, homodimer. Mg(2+) is required as a cofactor.

It is found in the cytoplasm. The enzyme catalyses tRNA(Lys) + L-lysine + ATP = L-lysyl-tRNA(Lys) + AMP + diphosphate. This chain is Lysine--tRNA ligase, found in Streptococcus pneumoniae serotype 19F (strain G54).